The chain runs to 428 residues: Elongation factor 1-alpha (428 aa).

The tr-type G domain occupies 5 to 225 (KPILNVAFIG…DAFQPPEKPT (221 aa)). A G1 region spans residues 14–21 (GHVDAGKS). A GTP-binding site is contributed by 14 to 21 (GHVDAGKS). Serine 21 lines the Mg(2+) pocket. Residues 70 to 74 (GVTID) form a G2 region. The segment at 91-94 (DCPG) is G3. GTP is bound by residues 91–95 (DCPGH) and 149–152 (NKMD). Residues 149–152 (NKMD) are G4. A G5 region spans residues 189-191 (ASL).

Belongs to the TRAFAC class translation factor GTPase superfamily. Classic translation factor GTPase family. EF-Tu/EF-1A subfamily.

Its subcellular location is the cytoplasm. The enzyme catalyses GTP + H2O = GDP + phosphate + H(+). GTP hydrolase that promotes the GTP-dependent binding of aminoacyl-tRNA to the A-site of ribosomes during protein biosynthesis. In Methanococcus maripaludis (strain C5 / ATCC BAA-1333), this protein is Elongation factor 1-alpha.